The following is a 273-amino-acid chain: Ribosomal RNA small subunit methyltransferase A (273 aa).

S-adenosyl-L-methionine is bound by residues Asn-18, Leu-20, Gly-45, Glu-66, Asp-91, and Asn-113.

Belongs to the class I-like SAM-binding methyltransferase superfamily. rRNA adenine N(6)-methyltransferase family. RsmA subfamily.

The protein resides in the cytoplasm. The catalysed reaction is adenosine(1518)/adenosine(1519) in 16S rRNA + 4 S-adenosyl-L-methionine = N(6)-dimethyladenosine(1518)/N(6)-dimethyladenosine(1519) in 16S rRNA + 4 S-adenosyl-L-homocysteine + 4 H(+). Functionally, specifically dimethylates two adjacent adenosines (A1518 and A1519) in the loop of a conserved hairpin near the 3'-end of 16S rRNA in the 30S particle. May play a critical role in biogenesis of 30S subunits. This Shigella boydii serotype 4 (strain Sb227) protein is Ribosomal RNA small subunit methyltransferase A.